The primary structure comprises 184 residues: Shikimate kinase (184 aa).

ATP is bound at residue 17–22; it reads GAGKTT. Threonine 21 is a binding site for Mg(2+). Substrate contacts are provided by aspartate 39, arginine 63, and glycine 85. An ATP-binding site is contributed by arginine 123. Residue arginine 142 coordinates substrate.

This sequence belongs to the shikimate kinase family. As to quaternary structure, monomer. Mg(2+) serves as cofactor.

The protein localises to the cytoplasm. The enzyme catalyses shikimate + ATP = 3-phosphoshikimate + ADP + H(+). It participates in metabolic intermediate biosynthesis; chorismate biosynthesis; chorismate from D-erythrose 4-phosphate and phosphoenolpyruvate: step 5/7. Its function is as follows. Catalyzes the specific phosphorylation of the 3-hydroxyl group of shikimic acid using ATP as a cosubstrate. In Burkholderia thailandensis (strain ATCC 700388 / DSM 13276 / CCUG 48851 / CIP 106301 / E264), this protein is Shikimate kinase.